The sequence spans 375 residues: GDP-mannose-dependent alpha-mannosyltransferase (375 aa).

This sequence belongs to the glycosyltransferase group 1 family. Glycosyltransferase 4 subfamily.

Its pathway is phospholipid metabolism; phosphatidylinositol metabolism. Functionally, catalyzes the addition of a mannose residue from GDP-D-mannose to GlcAGroAc2 to generate 1,2-di-O-C16/C18:1-(alpha-D-mannopyranosyl)-(1-4)-(alpha-D-glucopyranosyluronic acid)-(1-3)-glycerol(ManGlcAGroAc2). The protein is GDP-mannose-dependent alpha-mannosyltransferase (mgtA) of Mycolicibacterium smegmatis (strain ATCC 700084 / mc(2)155) (Mycobacterium smegmatis).